The chain runs to 67 residues: Large ribosomal subunit protein bL35 (67 aa).

This sequence belongs to the bacterial ribosomal protein bL35 family.

In Anaeromyxobacter sp. (strain Fw109-5), this protein is Large ribosomal subunit protein bL35.